The following is a 99-amino-acid chain: Co-chaperonin GroES (99 aa).

It belongs to the GroES chaperonin family. Heptamer of 7 subunits arranged in a ring. Interacts with the chaperonin GroEL.

It is found in the cytoplasm. Together with the chaperonin GroEL, plays an essential role in assisting protein folding. The GroEL-GroES system forms a nano-cage that allows encapsulation of the non-native substrate proteins and provides a physical environment optimized to promote and accelerate protein folding. GroES binds to the apical surface of the GroEL ring, thereby capping the opening of the GroEL channel. The protein is Co-chaperonin GroES of Methylacidiphilum infernorum (isolate V4) (Methylokorus infernorum (strain V4)).